The sequence spans 79 residues: Sec-independent protein translocase protein TatA (79 aa).

The chain crosses the membrane as a helical span at residues 1 to 21 (MGGFTSIWHWVIVLLVIVLLF). Residues 48–79 (EEEAKNEPKTLDAQATQTKAHESSEIKSKQES) are disordered. A compositionally biased stretch (basic and acidic residues) spans 66–79 (KAHESSEIKSKQES).

Belongs to the TatA/E family. In terms of assembly, the Tat system comprises two distinct complexes: a TatABC complex, containing multiple copies of TatA, TatB and TatC subunits, and a separate TatA complex, containing only TatA subunits. Substrates initially bind to the TatABC complex, which probably triggers association of the separate TatA complex to form the active translocon.

It is found in the cell inner membrane. Part of the twin-arginine translocation (Tat) system that transports large folded proteins containing a characteristic twin-arginine motif in their signal peptide across membranes. TatA could form the protein-conducting channel of the Tat system. This chain is Sec-independent protein translocase protein TatA, found in Helicobacter pylori (strain P12).